A 623-amino-acid chain; its full sequence is Low affinity potassium transport system protein Kup (623 aa).

12 helical membrane-spanning segments follow: residues 9–29, 49–69, 101–121, 137–157, 163–183, 212–232, 247–267, 276–296, 337–357, 363–383, 395–415, and 419–439; these read LPAI…TSPL, VFGF…FKYL, VLVI…VITP, PSLD…LFMI, GMVG…LAVL, AVSF…EALY, WFSV…ALLL, PFFL…ATLA, IYIP…IVSF, LAAA…ILFA, ILVG…FSAN, and LFSG…IMTT.

Belongs to the HAK/KUP transporter (TC 2.A.72) family.

The protein localises to the cell inner membrane. The enzyme catalyses K(+)(in) + H(+)(in) = K(+)(out) + H(+)(out). Responsible for the low-affinity transport of potassium into the cell. Likely operates as a K(+):H(+) symporter. The protein is Low affinity potassium transport system protein Kup of Cronobacter sakazakii (strain ATCC BAA-894) (Enterobacter sakazakii).